We begin with the raw amino-acid sequence, 253 residues long: MICOS complex subunit mic25-b (253 aa).

The N-myristoyl glycine moiety is linked to residue glycine 2. The disordered stretch occupies residues 38–82; sequence KDQSTWAASGAASGSATVPSKVGSSASHPAAASKDGAHKPTAAGV. Over residues 44-53 the composition is skewed to low complexity; it reads AASGAASGSA. Positions 87-116 form a coiled coil; that stretch reads AEEDLYRRYEREQTLIQEELARLAKREKDA. Residues 206–248 enclose the CHCH domain; the sequence is DPVCMDLQSNILKCYAENKQERLNCSDLAKEYQKCVSAAQKNL. 2 short sequence motifs (cx9C motif) span residues 209 to 219 and 230 to 240; these read CMDLQSNILKC and CSDLAKEYQKC. 2 disulfides stabilise this stretch: cysteine 209-cysteine 240 and cysteine 219-cysteine 230.

It belongs to the MICOS complex subunit Mic19 family. Metazoan Mic25 subfamily. Component of the mitochondrial contact site and cristae organizing system (MICOS) complex (also known as MINOS or MitOS complex).

It is found in the mitochondrion inner membrane. Component of the MICOS complex, a large protein complex of the mitochondrial inner membrane that plays crucial roles in the maintenance of crista junctions, inner membrane architecture, and formation of contact sites to the outer membrane. This Xenopus laevis (African clawed frog) protein is MICOS complex subunit mic25-b (chchd6-b).